A 265-amino-acid chain; its full sequence is MMEKMILGRYIPGNSWLHRIDPRAKITAVMAFIAIVFLANNWLTYALMFAYVLYLVLTSKVPFLFFIKGLQPIFWLILITLLLQVFFTKGGTVLVDLGLLQITTLGLANGAMMFCRFVLIIFMTTLLTLTTSPIELTDGLEKILAPFRLVHLPVHELALMLSISLRFIPTLMDETEKILKAQKARGVEFTSGKWSDRIKAIIPLLVPLFISAFKRAEDLAIAMEARGYRGGKGRTRFRLLRWRFADTCLLISLAVLSGLLFWLRS.

Helical transmembrane passes span 29 to 49 (VMAFIAIVFLANNWLTYALMF), 63 to 83 (FLFFIKGLQPIFWLILITLLL), 94 to 114 (LVDLGLLQITTLGLANGAMMF), 117 to 137 (FVLIIFMTTLLTLTTSPIELT), 143 to 163 (ILAPFRLVHLPVHELALMLSI), and 243 to 263 (RFADTCLLISLAVLSGLLFWL).

The protein belongs to the energy-coupling factor EcfT family. Forms a stable energy-coupling factor (ECF) transporter complex composed of 2 membrane-embedded substrate-binding proteins (S component), 2 ATP-binding proteins (A component) and 2 transmembrane proteins (T component). May be able to interact with more than 1 S component at a time.

It localises to the cell membrane. In terms of biological role, transmembrane (T) component of an energy-coupling factor (ECF) ABC-transporter complex. Unlike classic ABC transporters this ECF transporter provides the energy necessary to transport a number of different substrates. This chain is Energy-coupling factor transporter transmembrane protein EcfT, found in Listeria innocua serovar 6a (strain ATCC BAA-680 / CLIP 11262).